A 236-amino-acid polypeptide reads, in one-letter code: Small ribosomal subunit protein uS2c (236 aa).

The protein belongs to the universal ribosomal protein uS2 family.

It is found in the plastid. The protein resides in the chloroplast. In Phalaenopsis aphrodite subsp. formosana (Moth orchid), this protein is Small ribosomal subunit protein uS2c (rps2).